The chain runs to 161 residues: GTP-dependent dephospho-CoA kinase (161 aa).

Residues aspartate 40, valine 41, valine 42, aspartate 59, and glutamate 112 each contribute to the GTP site.

Belongs to the GTP-dependent DPCK family.

It catalyses the reaction 3'-dephospho-CoA + GTP = GDP + CoA + H(+). It functions in the pathway cofactor biosynthesis; coenzyme A biosynthesis. Its function is as follows. Catalyzes the GTP-dependent phosphorylation of the 3'-hydroxyl group of dephosphocoenzyme A to form coenzyme A (CoA). The protein is GTP-dependent dephospho-CoA kinase of Methanoculleus marisnigri (strain ATCC 35101 / DSM 1498 / JR1).